Here is a 169-residue protein sequence, read N- to C-terminus: Protein-export protein SecB (169 aa).

Belongs to the SecB family. In terms of assembly, homotetramer, a dimer of dimers. One homotetramer interacts with 1 SecA dimer.

It localises to the cytoplasm. In terms of biological role, one of the proteins required for the normal export of preproteins out of the cell cytoplasm. It is a molecular chaperone that binds to a subset of precursor proteins, maintaining them in a translocation-competent state. It also specifically binds to its receptor SecA. This is Protein-export protein SecB from Mannheimia succiniciproducens (strain KCTC 0769BP / MBEL55E).